The chain runs to 612 residues: Threonine--tRNA ligase (612 aa).

Positions 218–509 are catalytic; it reads DHRKLGVELG…LSEHFGGNFP (292 aa). Residues Cys-310, His-361, and His-486 each contribute to the Zn(2+) site.

Belongs to the class-II aminoacyl-tRNA synthetase family. As to quaternary structure, homodimer. It depends on Zn(2+) as a cofactor.

The protein resides in the cytoplasm. The enzyme catalyses tRNA(Thr) + L-threonine + ATP = L-threonyl-tRNA(Thr) + AMP + diphosphate + H(+). Catalyzes the attachment of threonine to tRNA(Thr) in a two-step reaction: L-threonine is first activated by ATP to form Thr-AMP and then transferred to the acceptor end of tRNA(Thr). Also edits incorrectly charged L-seryl-tRNA(Thr). This chain is Threonine--tRNA ligase, found in Helicobacter pylori (strain J99 / ATCC 700824) (Campylobacter pylori J99).